A 268-amino-acid polypeptide reads, in one-letter code: Tropinone reductase homolog At2g29370 (268 aa).

Position 22–46 (22–46 (LVTGGSKGLGKAVVEELAMLGARVH)) interacts with NADP(+). Ser155 contacts substrate. Catalysis depends on Tyr168, which acts as the Proton acceptor.

The protein belongs to the short-chain dehydrogenases/reductases (SDR) family. SDR65C subfamily.

The protein is Tropinone reductase homolog At2g29370 of Arabidopsis thaliana (Mouse-ear cress).